Reading from the N-terminus, the 531-residue chain is T-complex protein 1 subunit zeta-2 (531 aa).

Belongs to the TCP-1 chaperonin family. In terms of assembly, component of the chaperonin-containing T-complex (TRiC), a heterooligomeric complex of about 850 to 900 kDa that forms two stacked rings, 12 to 16 nm in diameter. Testis specific.

Its subcellular location is the cytoplasm. Its function is as follows. Component of the chaperonin-containing T-complex (TRiC), a molecular chaperone complex that assists the folding of proteins upon ATP hydrolysis. The protein is T-complex protein 1 subunit zeta-2 (Cct6b) of Mus musculus (Mouse).